A 714-amino-acid chain; its full sequence is GATA zinc finger domain-containing protein 10 (714 aa).

Disordered stretches follow at residues 28-97 (YIQQ…NKQI), 115-180 (TMPH…QQQQ), 266-362 (MPMN…QQQQ), 394-419 (QQQQ…ESMD), 454-476 (MHLQ…QQIQ), and 528-621 (IQQQ…RRRT). Low complexity-rich tracts occupy residues 30–94 (QQQQ…NNNN) and 130–147 (QQQQ…QHPH). Over residues 148 to 168 (QQQHPHQQQHPHQQQHPHQQQ) the composition is skewed to basic residues. Residues 169 to 180 (HPHQQQIQQQQQ) show a composition bias toward low complexity. Residues 271–282 (GGNSRKNSFDMY) show a composition bias toward polar residues. 2 stretches are compositionally biased toward low complexity: residues 283–322 (NNNN…NNNI) and 340–362 (QHQQ…QQQQ). Composition is skewed to low complexity over residues 457–476 (QQQQ…QQIQ) and 528–549 (IQQQ…TPNN). Over residues 550–569 (GSPSSSDGKSPVNSNTAITS) the composition is skewed to polar residues. The segment covering 570–588 (NNNNNNNNNNNNNNNNNNN) has biased composition (low complexity). The GATA-type zinc-finger motif lies at 631–656 (CHYCEVTETPEWRRGPDGDHTLCNAC). The stretch at 661–694 (AKSQKKLAREKELEKQKELEREKERENTRKHSID) forms a coiled coil. Positions 667–693 (LAREKELEKQKELEREKERENTRKHSI) are enriched in basic and acidic residues. The interval 667–714 (LAREKELEKQKELEREKERENTRKHSIDFMLMNDTSSAPTNSQNPTPN) is disordered. Over residues 699–714 (NDTSSAPTNSQNPTPN) the composition is skewed to polar residues.

This chain is GATA zinc finger domain-containing protein 10 (gtaJ), found in Dictyostelium discoideum (Social amoeba).